The primary structure comprises 60 residues: UPF0434 protein YcaR (60 aa).

Belongs to the UPF0434 family.

This Escherichia fergusonii (strain ATCC 35469 / DSM 13698 / CCUG 18766 / IAM 14443 / JCM 21226 / LMG 7866 / NBRC 102419 / NCTC 12128 / CDC 0568-73) protein is UPF0434 protein YcaR.